We begin with the raw amino-acid sequence, 470 residues long: E3 SUMO-protein ligase EGR2 (470 aa).

A compositionally biased stretch (low complexity) spans 126 to 141 (PPASTTASSSVTSASP). Disordered regions lie at residues 126-153 (PPAS…GVCT), 159-178 (PELD…SGCT), and 184-211 (DPSA…YPSP). The residue at position 247 (K247) is an N6-acetyllysine; by EP300. Positions 275–344 (GPSAGVTGPG…RPYPCPAEGC (70 aa)) are disordered. Positions 281-291 (TGPGASGGGEG) are enriched in gly residues. C2H2-type zinc fingers lie at residues 337–361 (YPCP…IRIH), 367–389 (FQCR…IRTH), and 395–417 (FACD…TKIH). The interval 408-470 (DERKRHTKIH…ASCTSRTRTP (63 aa)) is disordered. Positions 412 to 422 (RHTKIHLRQKE) are enriched in basic residues. Low complexity predominate over residues 426–439 (SAPSSSASAQSSAS). Residues 440–450 (GPGGSQAGGSL) show a composition bias toward gly residues.

The protein belongs to the EGR C2H2-type zinc-finger protein family. Interacts with HCFC1. Interacts with WWP2. Interacts with UBC9. Interacts with CITED1. Interacts (via phosphorylated form) with SFN. Ubiquitinated by WWP2 leading to proteasomal degradation. Post-translationally, acetylated at Lys-247. May be deacetylated by HDAC6, HDAC10 or SIRT1.

It is found in the nucleus. It participates in protein modification; protein sumoylation. Its function is as follows. Sequence-specific DNA-binding transcription factor. Plays a role in hindbrain segmentation by regulating the expression of a subset of homeobox containing genes and in Schwann cell myelination by regulating the expression of genes involved in the formation and maintenance of myelin. Binds to two EGR2-consensus sites EGR2A (5'-CTGTAGGAG-3') and EGR2B (5'-ATGTAGGTG-3') in the HOXB3 enhancer and promotes HOXB3 transcriptional activation. Binds to specific DNA sites located in the promoter region of HOXA4, HOXB2 and ERBB2. Regulates hindbrain segmentation by controlling the expression of Hox genes, such as HOXA4, HOXB3 and HOXB2, and thereby specifying odd and even rhombomeres. Promotes the expression of HOXB3 in the rhombomere r5 in the hindbrain. Regulates myelination in the peripheral nervous system after birth, possibly by regulating the expression of myelin proteins, such as MPZ, and by promoting the differentiation of Schwann cells. Involved in the development of the jaw openener musculature, probably by playing a role in its innervation through trigeminal motor neurons. May play a role in adipogenesis, possibly by regulating the expression of CEBPB. Functionally, E3 SUMO-protein ligase helping SUMO1 conjugation to its coregulators NAB1 and NAB2, whose sumoylation down-regulates EGR2 transcriptional activity. In Rattus norvegicus (Rat), this protein is E3 SUMO-protein ligase EGR2 (Egr2).